The following is an 858-amino-acid chain: Conidiophore development regulator abaA (858 aa).

A disordered region spans residues 1–22 (MSSSLYHPRPVLSSQRYTPSPD). The segment at residues 128–221 (QKDKGGVWRR…QVVKKFFEDL (94 aa)) is a DNA-binding region (TEA). Residues 500–522 (VEHQRKKEKRTKGDDRKNLDRAG) show a composition bias toward basic and acidic residues. Disordered regions lie at residues 500 to 535 (VEHQRKKEKRTKGDDRKNLDRAGSKRKRSEDDGDAA) and 792 to 858 (TGAG…AGGW). The Nuclear localization signal signature appears at 514–521 (DRKNLDRA). A compositionally biased stretch (polar residues) spans 809 to 822 (SSDQTALWTQSQWA).

It belongs to the TEC1 family.

The protein resides in the nucleus. AbaA and wetA are pivotal regulators of conidiophore development and conidium maturation. They act individually and together to regulate their own expression and that of numerous other sporulation-specific genes. Binds to the sequence 5'-CATTCY-3', where Y is a pyrimidine, making both major- and minor-groove contacts. Plays a pivotal role in conidiation by regulating cell cycle pathways and other conidiation-related genes. The chain is Conidiophore development regulator abaA from Gibberella zeae (strain ATCC MYA-4620 / CBS 123657 / FGSC 9075 / NRRL 31084 / PH-1) (Wheat head blight fungus).